The sequence spans 285 residues: Alginate lyase (285 aa).

An N-terminal signal peptide occupies residues 1 to 20 (MIKSNLVISSLAIVSSMSYA).

It belongs to the polysaccharide lyase 6 family.

It carries out the reaction Eliminative cleavage of alginate to give oligosaccharides with 4-deoxy-alpha-L-erythro-hex-4-enuronosyl groups at their non-reducing ends and beta-D-mannuronate at their reducing end.. The sequence is that of Alginate lyase (alxM) from Photobacterium sp. (strain ATCC 43367).